Reading from the N-terminus, the 452-residue chain is Lamina-associated polypeptide 2, isoforms beta/delta/epsilon/gamma (452 aa).

The segment at 1-409 (MPEFLEDPSV…KSEKTKKRRS (409 aa)) is nucleoplasmic. Residues 5 to 48 (LEDPSVLTKDKLKSELVANNVTLPAGEQRKDVYVQLYLQHLTAR) form the LEM-like domain. 2 disordered regions span residues 48–111 (RNRP…DLDV) and 149–263 (REQG…RVET). The linker stretch occupies residues 49–108 (NRPPLAAGANSKGPPDFSSDEEREPTPVLGSGASVGRGRGAVGRKATKKTDKPRLEDKDD). Residues S59, S66, and S67 each carry the phosphoserine modification. At T74 the chain carries Phosphothreonine. Phosphoserine occurs at positions 79 and 82. 2 positions are modified to omega-N-methylarginine: R85 and R87. Basic and acidic residues predominate over residues 96–105 (KKTDKPRLED). The LEM domain occupies 109–153 (LDVTELSNEELLDQLVRYGVNPGPIVGTTRKLYEKKLLKLREQGT). The NAKAP95-binding N stretch occupies residues 137-242 (TRKLYEKKLL…TSGSSTGGPL (106 aa)). The residue at position 153 (T153) is a Phosphothreonine. The segment covering 154–177 (ESRSSTPLPTVSSSAENTRQNGSN) has biased composition (polar residues). Residues S155 and S158 each carry the phosphoserine modification. T159 and T163 each carry phosphothreonine. Residues S165, S167, and S176 each carry the phosphoserine modification. A compositionally biased stretch (basic and acidic residues) spans 178-202 (DSDRYSDNDEDSKIELKLEKREPLK). The residue at position 179 (S179) is a Phosphoserine; by PKC. Phosphoserine occurs at positions 183 and 189. K206 is subject to N6-acetyllysine. Position 210 is a phosphothreonine (T210). 2 positions are modified to phosphoserine: S221 and S223. Positions 226–240 (GVTETEWTSGSSTGG) are enriched in low complexity. A phosphoserine mark is found at S249, S253, S264, S291, S305, and S306. The segment at 298–370 (TGNFKHASSI…SCRRPIKGAA (73 aa)) is binds lamins B. The NAKAP95-binding C stretch occupies residues 299 to 373 (GNFKHASSIL…RPIKGAAGRP (75 aa)). Position 311 is a phosphothreonine (T311). A Phosphoserine modification is found at S314. R319 is modified (citrulline). Residues S361, S377, and S384 each carry the phosphoserine modification. N6-acetyllysine is present on K388. A Glycyl lysine isopeptide (Lys-Gly) (interchain with G-Cter in SUMO2) cross-link involves residue K400. The residue at position 401 (S401) is a Phosphoserine. The helical; Signal-anchor for type II membrane protein transmembrane segment at 410–430 (VPMWIKMLLFALVAVFLFLVY) threads the bilayer. Residues 431 to 452 (QAMETNQGNPFTNFLQDTKISN) are Lumenal-facing.

Belongs to the LEM family. In terms of assembly, interacts with LMNB1, LMNB2, BANF1, AKAP8L, GMCL and chromosomes. Post-translationally, mitosis-specific phosphorylation specifically abolishes its binding to lamin B and chromosomes. Citrullinated by PADI4.

Its subcellular location is the nucleus inner membrane. The protein localises to the chromosome. In terms of biological role, may help direct the assembly of the nuclear lamina and thereby help maintain the structural organization of the nuclear envelope. Possible receptor for attachment of lamin filaments to the inner nuclear membrane. May be involved in the control of initiation of DNA replication through its interaction with NAKAP95. The sequence is that of Lamina-associated polypeptide 2, isoforms beta/delta/epsilon/gamma (Tmpo) from Mus musculus (Mouse).